Consider the following 146-residue polypeptide: Anti-sigma F factor (146 aa).

This sequence belongs to the anti-sigma-factor family.

It catalyses the reaction L-seryl-[protein] + ATP = O-phospho-L-seryl-[protein] + ADP + H(+). It carries out the reaction L-threonyl-[protein] + ATP = O-phospho-L-threonyl-[protein] + ADP + H(+). Its function is as follows. Binds to sigma F and blocks its ability to form an RNA polymerase holoenzyme (E-sigma F). Phosphorylates SpoIIAA on a serine residue. This phosphorylation may enable SpoIIAA to act as an anti-anti-sigma factor that counteracts SpoIIAB and thus releases sigma F from inhibition. In Bacillus anthracis (strain A0248), this protein is Anti-sigma F factor.